A 226-amino-acid chain; its full sequence is Phosphoribosylformylglycinamidine synthase subunit PurQ (226 aa).

The 224-residue stretch at 3 to 226 folds into the Glutamine amidotransferase type-1 domain; the sequence is RVAVIRFPGT…FESLVEWCRS (224 aa). The Nucleophile role is filled by Cys-86. Active-site residues include His-199 and Glu-201.

In terms of assembly, part of the FGAM synthase complex composed of 1 PurL, 1 PurQ and 2 PurS subunits.

It is found in the cytoplasm. The catalysed reaction is N(2)-formyl-N(1)-(5-phospho-beta-D-ribosyl)glycinamide + L-glutamine + ATP + H2O = 2-formamido-N(1)-(5-O-phospho-beta-D-ribosyl)acetamidine + L-glutamate + ADP + phosphate + H(+). The enzyme catalyses L-glutamine + H2O = L-glutamate + NH4(+). Its pathway is purine metabolism; IMP biosynthesis via de novo pathway; 5-amino-1-(5-phospho-D-ribosyl)imidazole from N(2)-formyl-N(1)-(5-phospho-D-ribosyl)glycinamide: step 1/2. In terms of biological role, part of the phosphoribosylformylglycinamidine synthase complex involved in the purines biosynthetic pathway. Catalyzes the ATP-dependent conversion of formylglycinamide ribonucleotide (FGAR) and glutamine to yield formylglycinamidine ribonucleotide (FGAM) and glutamate. The FGAM synthase complex is composed of three subunits. PurQ produces an ammonia molecule by converting glutamine to glutamate. PurL transfers the ammonia molecule to FGAR to form FGAM in an ATP-dependent manner. PurS interacts with PurQ and PurL and is thought to assist in the transfer of the ammonia molecule from PurQ to PurL. This chain is Phosphoribosylformylglycinamidine synthase subunit PurQ, found in Methanopyrus kandleri (strain AV19 / DSM 6324 / JCM 9639 / NBRC 100938).